We begin with the raw amino-acid sequence, 276 residues long: MHFHFSKMHGLGNDFMVVDCITQNVFFSPELIRRLADRHTGVGFDQLLVVEAPYDPESDFHYRIFNADGSEVEQCGNGARCFARFVRMKGLTNKYTIHVSTKKGKMVLNVEEEDLITVNMGVPEFEPNKIPFRAKQSEKTYILRVGEHTLFCGAVSMGNPHVVTVVDDIRTAAVETLGPLLESHERFPERVNAGFMQVVSRDEINLRVYERGAGETQACGSGACAAVAVGILQGLLDEQVRVHLPGGELEIHWQGPGKPLYMTGPATHIYDGQISC.

Substrate is bound by residues asparagine 13, glutamine 46, and asparagine 66. Residue cysteine 75 is the Proton donor of the active site. Substrate is bound by residues 76–77, asparagine 159, asparagine 192, and 210–211; these read GN and ER. Cysteine 219 serves as the catalytic Proton acceptor. 220-221 is a substrate binding site; sequence GS.

The protein belongs to the diaminopimelate epimerase family. In terms of assembly, homodimer.

Its subcellular location is the cytoplasm. The catalysed reaction is (2S,6S)-2,6-diaminopimelate = meso-2,6-diaminopimelate. Its pathway is amino-acid biosynthesis; L-lysine biosynthesis via DAP pathway; DL-2,6-diaminopimelate from LL-2,6-diaminopimelate: step 1/1. In terms of biological role, catalyzes the stereoinversion of LL-2,6-diaminopimelate (L,L-DAP) to meso-diaminopimelate (meso-DAP), a precursor of L-lysine and an essential component of the bacterial peptidoglycan. The sequence is that of Diaminopimelate epimerase from Vibrio cholerae serotype O1 (strain ATCC 39541 / Classical Ogawa 395 / O395).